Consider the following 301-residue polypeptide: Vomeronasal type-1 receptor 4 (301 aa).

At 1–15 (MASRYVAVGMMLSQT) the chain is on the extracellular side. A helical transmembrane segment spans residues 16–36 (VVGVLGSFSLLLHYLSLHYIG). Topologically, residues 37-48 (CRLRSADLIVKH) are cytoplasmic. The helical transmembrane segment at 49–69 (LIAASFLTLLCKGVPQTMAAF) threads the bilayer. Over 70 to 88 (RVRYFLNAIGCKLVFYLHR) the chain is Extracellular. The helical transmembrane segment at 89–107 (VGRGVSTGTTCLLSVFQVI) threads the bilayer. At 108–126 (TVSSRKSRWAKLKEKAPKH) the chain is on the cytoplasmic side. The helical transmembrane segment at 127-147 (VGFSVLLCWILCMLVNIIFPI) threads the bilayer. The Extracellular portion of the chain corresponds to 148–185 (YVTGKRNHTNITVNKDLGDCCGRGNNKIAQTLRAMLLS). N-linked (GlcNAc...) asparagine glycans are attached at residues Asn-154 and Asn-157. The chain crosses the membrane as a helical span at residues 186–206 (FPDVLCLGFMLWASSSMVCIL). The Cytoplasmic portion of the chain corresponds to 207–234 (HRHKQRVQHIHRSNLSPRASPENRATQS). The helical transmembrane segment at 235–255 (ILIPVSTFVSSYTLSCLLQVC) threads the bilayer. Residues 256–264 (MALLDNPNS) lie on the Extracellular side of the membrane. The chain crosses the membrane as a helical span at residues 265 to 285 (LLVNTSALMSACFPTLSPFVL). The Cytoplasmic segment spans residues 286-301 (MSCDPSVYRLCFAWKR).

The protein belongs to the G-protein coupled receptor 1 family.

The protein resides in the cell membrane. In terms of biological role, putative pheromone receptor. In Pongo pygmaeus (Bornean orangutan), this protein is Vomeronasal type-1 receptor 4 (VN1R4).